We begin with the raw amino-acid sequence, 608 residues long: Formate hydrogenlyase subunit 3 (608 aa).

A run of 12 helical transmembrane segments spans residues 10–26, 44–67, 76–93, 116–140, 153–173, 197–218, 229–251, 258–280, 296–312, 416–440, 453–476, and 502–521; these read GVAW…LFSF, LYTA…LSLV, LNAI…FVSL, AAAV…MALC, LWFA…WLLW, IWLL…HGWV, AAAL…LSLL, WWGI…YALV, IGII…GIAL, LAVG…VTFL, CAPL…GVAA, and MITL…MAIC.

Belongs to the complex I subunit 4 family. FHL comprises of a formate dehydrogenase, unidentified electron carriers and a hydrogenase (isoenzyme 3). In this non-energy conserving pathway molecular hydrogen and carbodioxide from formate are released.

The protein localises to the cell inner membrane. The polypeptide is Formate hydrogenlyase subunit 3 (hycC) (Escherichia coli (strain K12)).